Here is a 505-residue protein sequence, read N- to C-terminus: Flagellin (505 aa).

The protein belongs to the bacterial flagellin family.

Its subcellular location is the secreted. The protein resides in the bacterial flagellum. In terms of biological role, flagellin is the subunit protein which polymerizes to form the filaments of bacterial flagella. The sequence is that of Flagellin (fliC) from Salmonella moscow.